The following is a 382-amino-acid chain: Queuine tRNA-ribosyltransferase (382 aa).

Aspartate 96 (proton acceptor) is an active-site residue. Residues 96 to 100 (DSGGF), aspartate 151, glutamine 194, and glycine 221 each bind substrate. The segment at 252–258 (GVGAPDS) is RNA binding. The Nucleophile role is filled by aspartate 271. The segment at 276 to 280 (TRIAR) is RNA binding; important for wobble base 34 recognition. 4 residues coordinate Zn(2+): cysteine 309, cysteine 311, cysteine 314, and histidine 340.

The protein belongs to the queuine tRNA-ribosyltransferase family. In terms of assembly, homodimer. Within each dimer, one monomer is responsible for RNA recognition and catalysis, while the other monomer binds to the replacement base PreQ1. The cofactor is Zn(2+).

It catalyses the reaction 7-aminomethyl-7-carbaguanine + guanosine(34) in tRNA = 7-aminomethyl-7-carbaguanosine(34) in tRNA + guanine. It functions in the pathway tRNA modification; tRNA-queuosine biosynthesis. Functionally, catalyzes the base-exchange of a guanine (G) residue with the queuine precursor 7-aminomethyl-7-deazaguanine (PreQ1) at position 34 (anticodon wobble position) in tRNAs with GU(N) anticodons (tRNA-Asp, -Asn, -His and -Tyr). Catalysis occurs through a double-displacement mechanism. The nucleophile active site attacks the C1' of nucleotide 34 to detach the guanine base from the RNA, forming a covalent enzyme-RNA intermediate. The proton acceptor active site deprotonates the incoming PreQ1, allowing a nucleophilic attack on the C1' of the ribose to form the product. After dissociation, two additional enzymatic reactions on the tRNA convert PreQ1 to queuine (Q), resulting in the hypermodified nucleoside queuosine (7-(((4,5-cis-dihydroxy-2-cyclopenten-1-yl)amino)methyl)-7-deazaguanosine). The polypeptide is Queuine tRNA-ribosyltransferase (Lactococcus lactis subsp. cremoris (strain SK11)).